The primary structure comprises 81 residues: ATP synthase subunit C, plastid (81 aa).

2 helical membrane-spanning segments follow: residues proline 3–glycine 23 and leucine 57–alanine 77.

It belongs to the ATPase C chain family. In terms of assembly, F-type ATPases have 2 components, F(1) - the catalytic core - and F(0) - the membrane proton channel. F(1) has five subunits: alpha(3), beta(3), gamma(1), delta(1), epsilon(1). F(0) has four main subunits: a(1), b(1), b'(1) and c(10-14). The alpha and beta chains form an alternating ring which encloses part of the gamma chain. F(1) is attached to F(0) by a central stalk formed by the gamma and epsilon chains, while a peripheral stalk is formed by the delta, b and b' chains.

The protein localises to the plastid membrane. In terms of biological role, f(1)F(0) ATP synthase produces ATP from ADP in the presence of a proton or sodium gradient. F-type ATPases consist of two structural domains, F(1) containing the extramembraneous catalytic core and F(0) containing the membrane proton channel, linked together by a central stalk and a peripheral stalk. During catalysis, ATP synthesis in the catalytic domain of F(1) is coupled via a rotary mechanism of the central stalk subunits to proton translocation. Its function is as follows. Key component of the F(0) channel; it plays a direct role in translocation across the membrane. A homomeric c-ring of between 10-14 subunits forms the central stalk rotor element with the F(1) delta and epsilon subunits. The protein is ATP synthase subunit C, plastid of Cuscuta gronovii (Common dodder).